We begin with the raw amino-acid sequence, 525 residues long: Plant UBX domain-containing protein 13 (525 aa).

In terms of domain architecture, UBA-like spans 2 to 44 (ATPTQEAIDTFMTITGSSNAVAVRKLEEYRGNLNRAVNAYFTH). Disordered regions lie at residues 67-96 (RTTD…PPFV), 150-172 (DDDN…SAEN), and 194-328 (METG…EEHD). Residues 209 to 229 (AEREVLRSEGWKASSSEREAS) show a composition bias toward basic and acidic residues. The segment covering 254 to 274 (SEDDDDDDDDDPDYVEEEEEP) has biased composition (acidic residues). S362 carries the phosphoserine modification. Residues 380-436 (LASLEADRVKAEARRLEEEAARVEAIEEAKRKEEEARRKVEEEQELERQLVSKEASL) adopt a coiled-coil conformation. The span at 408 to 430 (AKRKEEEARRKVEEEQELERQLV) shows a compositional bias: basic and acidic residues. The interval 408-446 (AKRKEEEARRKVEEEQELERQLVSKEASLPQEPPAGEEN) is disordered. The UBX domain occupies 443–521 (GEENAITLQV…GLTSKQEALF (79 aa)).

This is Plant UBX domain-containing protein 13 from Arabidopsis thaliana (Mouse-ear cress).